An 80-amino-acid polypeptide reads, in one-letter code: ATP synthase subunit c (80 aa).

2 helical membrane passes run 8 to 28 and 55 to 75; these read MIYFAAAIMLGMAAVGAAIGI and IVMGLVDAIPMIVVGMALYLI.

This sequence belongs to the ATPase C chain family. In terms of assembly, F-type ATPases have 2 components, F(1) - the catalytic core - and F(0) - the membrane proton channel. F(1) has five subunits: alpha(3), beta(3), gamma(1), delta(1), epsilon(1). F(0) has three main subunits: a(1), b(2) and c(10-14). The alpha and beta chains form an alternating ring which encloses part of the gamma chain. F(1) is attached to F(0) by a central stalk formed by the gamma and epsilon chains, while a peripheral stalk is formed by the delta and b chains.

Its subcellular location is the cell inner membrane. In terms of biological role, f(1)F(0) ATP synthase produces ATP from ADP in the presence of a proton or sodium gradient. F-type ATPases consist of two structural domains, F(1) containing the extramembraneous catalytic core and F(0) containing the membrane proton channel, linked together by a central stalk and a peripheral stalk. During catalysis, ATP synthesis in the catalytic domain of F(1) is coupled via a rotary mechanism of the central stalk subunits to proton translocation. Functionally, key component of the F(0) channel; it plays a direct role in translocation across the membrane. A homomeric c-ring of between 10-14 subunits forms the central stalk rotor element with the F(1) delta and epsilon subunits. In Aeromonas salmonicida (strain A449), this protein is ATP synthase subunit c.